We begin with the raw amino-acid sequence, 213 residues long: Thymidylate kinase (213 aa).

An ATP-binding site is contributed by 10-17; the sequence is GLEGAGKT.

It belongs to the thymidylate kinase family.

It carries out the reaction dTMP + ATP = dTDP + ADP. Its function is as follows. Phosphorylation of dTMP to form dTDP in both de novo and salvage pathways of dTTP synthesis. In Shigella boydii serotype 18 (strain CDC 3083-94 / BS512), this protein is Thymidylate kinase.